The sequence spans 1024 residues: Beta-galactosidase (1024 aa).

The substrate site is built by asparagine 103 and aspartate 202. Aspartate 202 contacts Na(+). Positions 417, 419, and 462 each coordinate Mg(2+). Substrate contacts are provided by residues glutamate 462 and 538-541; that span reads EYAH. Glutamate 462 functions as the Proton donor in the catalytic mechanism. Glutamate 538 functions as the Nucleophile in the catalytic mechanism. Asparagine 598 serves as a coordination point for Mg(2+). Residues phenylalanine 602 and asparagine 605 each contribute to the Na(+) site. Substrate is bound by residues asparagine 605 and tryptophan 1000.

It belongs to the glycosyl hydrolase 2 family. Homotetramer. Mg(2+) serves as cofactor. It depends on Na(+) as a cofactor.

It carries out the reaction Hydrolysis of terminal non-reducing beta-D-galactose residues in beta-D-galactosides.. This Escherichia coli (strain SMS-3-5 / SECEC) protein is Beta-galactosidase.